A 368-amino-acid chain; its full sequence is Leu/Ile/Val-binding protein homolog 3 (368 aa).

The first 23 residues, 1–23 (MNLKLLSSVAFAATIGFASAAYA), serve as a signal peptide directing secretion.

It belongs to the leucine-binding protein family.

Functionally, component of an amino-acid transport system. This chain is Leu/Ile/Val-binding protein homolog 3, found in Brucella melitensis biotype 1 (strain ATCC 23456 / CCUG 17765 / NCTC 10094 / 16M).